The chain runs to 776 residues: MASLIYRQLLSNSYVTNISDEVSEIGARKTANVTVNPGPFAQTGYAPVNWGHGELSDSTLVQPTLDGPYQPTTFNLPIDYWMLIAPTQIGRVAEGTNTTNRWFACVLVELNVQNTQREYVLDGQTVQLQVSNDSSTLWKFILFIKLEKNGTYTQYSTLSTSNKLCAWMKREGRVYSYAGVTPNASESYYLTINNDDSNVSSDAEFYLIPQSQTELCTQYINNGLPPIQNTRNVVPVSLTSREIRHSRAQMNEDIVVSKTSLWKEMQYNRDITIRFKFANSIVKSGGLGYKWSEISFKPMNYQYTYTRDGEEITAHTTCSVNGVNDFTYNGGPLPTDFAISRFEVIKENSYVYIDYWDDSQAFRNMVYVRSLAADLNDVVCSGGDYSFALPVGAYPIMSGGAVTLSPAGVTLSTQFTDYVSLNSLRFRFRLAVSEPSFSISRTRLSGIYGLPAANPNNSVEYYEIAGRFSLISLVPTNDDYQTPIANSVTVRQDLERQLGELREEFNSLSQEIALSQLIDLATLPLDMFSMFSGIKSTVEAVKSMTTNIMKKFKTSNLANAISDLTNSMSDAASSISRSASVRSIGSNTTMRISTAIQTGEDLRTMTDASTQISNVSRSLRLREFTTQTDNLSFDDISAAVLKTKLDKSTQISQTTIPDIISESSEKFIPMRTYRVMDNDTGFETGIDGTFYAYRIDTFDEIPFDVEKFNRLITDSPVLSAIIDFKTLKNLNDNYGITKTQAMELLQSNPRTLKEFINSNNPIIRNRIENLIAQCRL.

The interval 65-224 (LDGPYQPTTF…LCTQYINNGL (160 aa)) is spike head. The segment at 248-479 (AQMNEDIVVS…LISLVPTNDD (232 aa)) is spike body and stalk (antigen domain). The DGE motif; interaction with ITGA2/ITGB1 heterodimer signature appears at 308–310 (DGE). A disulfide bond links cysteine 318 and cysteine 380. The segment at 389–409 (LPVGAYPIMSGGAVTLSPAGV) is hydrophobic; possible role in virus entry into host cell. Positions 448 to 450 (YGL) match the YGL motif; interaction with ITGA4 motif. The stretch at 484–511 (IANSVTVRQDLERQLGELREEFNSLSQE) forms a coiled coil. Positions 510 to 776 (QEIALSQLID…IENLIAQCRL (267 aa)) are spike foot.

The protein belongs to the rotavirus VP4 family. Homotrimer. VP4 adopts a dimeric appearance above the capsid surface, while forming a trimeric base anchored inside the capsid layer. Only hints of the third molecule are observed above the capsid surface. It probably performs a series of molecular rearrangements during viral entry. Prior to trypsin cleavage, it is flexible. The priming trypsin cleavage triggers its rearrangement into rigid spikes with approximate two-fold symmetry of their protruding parts. After an unknown second triggering event, cleaved VP4 may undergo another rearrangement, in which two VP5* subunits fold back on themselves and join a third subunit to form a tightly associated trimer, shaped like a folded umbrella. Interacts with VP6. Interacts with VP7. In terms of assembly, homotrimer. The trimer is coiled-coil stabilized by its C-terminus, however, its N-terminus, known as antigen domain or 'body', seems to be flexible allowing it to self-associate either as a dimer or a trimer. In terms of processing, proteolytic cleavage by trypsin results in activation of VP4 functions and greatly increases infectivity. The penetration into the host cell is dependent on trypsin treatment of VP4. It produces two peptides, VP5* and VP8* that remain associated with the virion. Cleavage of VP4 by trypsin probably occurs in vivo in the lumen of the intestine prior to infection of enterocytes. Trypsin seems to be incorporated into the three-layered viral particles but remains inactive as long as the viral outer capsid is intact and would only be activated upon the solubilization of the latter.

It localises to the virion. It is found in the host rough endoplasmic reticulum. Its subcellular location is the host cell membrane. The protein localises to the host cytoplasm. The protein resides in the host cytoskeleton. It localises to the host endoplasmic reticulum-Golgi intermediate compartment. Its function is as follows. Spike-forming protein that mediates virion attachment to the host epithelial cell receptors and plays a major role in cell penetration, determination of host range restriction and virulence. Rotavirus attachment and entry into the host cell probably involves multiple sequential contacts between the outer capsid proteins VP4 and VP7, and the cell receptors. It is subsequently lost, together with VP7, following virus entry into the host cell. Following entry into the host cell, low intracellular or intravesicular Ca(2+) concentration probably causes the calcium-stabilized VP7 trimers to dissociate from the virion. This step is probably necessary for the membrane-disrupting entry step and the release of VP4, which is locked onto the virion by VP7. During the virus exit from the host cell, VP4 seems to be required to target the newly formed virions to the host cell lipid rafts. In terms of biological role, forms the spike 'foot' and 'body' and acts as a membrane permeabilization protein that mediates release of viral particles from endosomal compartments into the cytoplasm. During entry, the part of VP5* that protrudes from the virus folds back on itself and reorganizes from a local dimer to a trimer. This reorganization may be linked to membrane penetration by exposing VP5* hydrophobic region. In integrin-dependent strains, VP5* targets the integrin heterodimer ITGA2/ITGB1 for cell attachment. Functionally, forms the head of the spikes and mediates the recognition of specific host cell surface glycans. It is the viral hemagglutinin and an important target of neutralizing antibodies. In sialic acid-dependent strains, VP8* binds to host cell sialic acid, most probably a ganglioside, providing the initial contact. In some other strains, VP8* mediates the attachment to histo-blood group antigens (HBGAs) for viral entry. The chain is Outer capsid protein VP4 from Homo sapiens (Human).